The following is a 383-amino-acid chain: Probable arabinan endo-1,5-alpha-L-arabinosidase D (383 aa).

The N-terminal stretch at 1–22 is a signal peptide; that stretch reads MVHITLPGLLLCLCLYLSVAPA. D49 (proton acceptor) is an active-site residue. N-linked (GlcNAc...) asparagine glycans are attached at residues N75, N163, and N206. The active-site Proton donor is E227. N-linked (GlcNAc...) asparagine glycosylation occurs at N325. Residue N356 is the site of GPI-anchor amidated asparagine attachment. The propeptide at 357–383 is removed in mature form; it reads PGNSLQPPSSVSLQIVAFLCLVILFTL.

Belongs to the glycosyl hydrolase 43 family.

It is found in the cell membrane. It carries out the reaction Endohydrolysis of (1-&gt;5)-alpha-arabinofuranosidic linkages in (1-&gt;5)-arabinans.. It functions in the pathway glycan metabolism; L-arabinan degradation. Its function is as follows. Endo-1,5-alpha-L-arabinanase involved in degradation of pectin. Its preferred substrate is linear 1,5-alpha-L-arabinan. The protein is Probable arabinan endo-1,5-alpha-L-arabinosidase D (abnD) of Emericella nidulans (strain FGSC A4 / ATCC 38163 / CBS 112.46 / NRRL 194 / M139) (Aspergillus nidulans).